Here is a 383-residue protein sequence, read N- to C-terminus: Probable protein phosphatase 2C 13 (383 aa).

The 272-residue stretch at 78–349 (RSGSFADIRS…DNMTVIVICF (272 aa)) folds into the PPM-type phosphatase domain. Mn(2+)-binding residues include Asp121, Gly122, Asp297, and Asp340.

It belongs to the PP2C family. Mg(2+) serves as cofactor. Requires Mn(2+) as cofactor.

It carries out the reaction O-phospho-L-seryl-[protein] + H2O = L-seryl-[protein] + phosphate. The catalysed reaction is O-phospho-L-threonyl-[protein] + H2O = L-threonyl-[protein] + phosphate. This is Probable protein phosphatase 2C 13 from Arabidopsis thaliana (Mouse-ear cress).